The primary structure comprises 317 residues: Signal recognition particle receptor FtsY (317 aa).

GTP is bound by residues 117 to 124, 199 to 203, and 263 to 266; these read GVNGVGKT, DTAGR, and TKLD.

It belongs to the GTP-binding SRP family. FtsY subfamily. As to quaternary structure, part of the signal recognition particle protein translocation system, which is composed of SRP and FtsY.

The protein resides in the cell membrane. Its subcellular location is the cytoplasm. The enzyme catalyses GTP + H2O = GDP + phosphate + H(+). Functionally, involved in targeting and insertion of nascent membrane proteins into the cytoplasmic membrane. Acts as a receptor for the complex formed by the signal recognition particle (SRP) and the ribosome-nascent chain (RNC). The polypeptide is Signal recognition particle receptor FtsY (Deinococcus radiodurans (strain ATCC 13939 / DSM 20539 / JCM 16871 / CCUG 27074 / LMG 4051 / NBRC 15346 / NCIMB 9279 / VKM B-1422 / R1)).